A 401-amino-acid chain; its full sequence is Acetate kinase (401 aa).

Asn-7 serves as a coordination point for Mg(2+). Residue Lys-14 coordinates ATP. Arg-91 serves as a coordination point for substrate. Residue Asp-148 is the Proton donor/acceptor of the active site. ATP contacts are provided by residues 208-212, 283-285, and 332-336; these read HLGNG, DFR, and GVGEN. Residue Glu-385 participates in Mg(2+) binding.

This sequence belongs to the acetokinase family. In terms of assembly, homodimer. It depends on Mg(2+) as a cofactor. The cofactor is Mn(2+).

The protein localises to the cytoplasm. It carries out the reaction acetate + ATP = acetyl phosphate + ADP. The protein operates within metabolic intermediate biosynthesis; acetyl-CoA biosynthesis; acetyl-CoA from acetate: step 1/2. Catalyzes the formation of acetyl phosphate from acetate and ATP. Can also catalyze the reverse reaction. The chain is Acetate kinase from Caldanaerobacter subterraneus subsp. tengcongensis (strain DSM 15242 / JCM 11007 / NBRC 100824 / MB4) (Thermoanaerobacter tengcongensis).